A 165-amino-acid chain; its full sequence is Ureidoglycolate lyase (165 aa).

This sequence belongs to the ureidoglycolate lyase family. As to quaternary structure, homodimer. The cofactor is Ni(2+).

The enzyme catalyses (S)-ureidoglycolate = urea + glyoxylate. It functions in the pathway nitrogen metabolism; (S)-allantoin degradation. Functionally, catalyzes the catabolism of the allantoin degradation intermediate (S)-ureidoglycolate, generating urea and glyoxylate. Involved in the utilization of allantoin as nitrogen source. The sequence is that of Ureidoglycolate lyase from Chelativorans sp. (strain BNC1).